The sequence spans 303 residues: Ribonuclease HIII (303 aa).

Residues 89 to 303 (WSVLGSDEVG…ANTKKAERLL (215 aa)) form the RNase H type-2 domain. 3 residues coordinate a divalent metal cation: Asp-95, Glu-96, and Asp-199.

Belongs to the RNase HII family. RnhC subfamily. The cofactor is Mn(2+). Requires Mg(2+) as cofactor.

It localises to the cytoplasm. It carries out the reaction Endonucleolytic cleavage to 5'-phosphomonoester.. Functionally, endonuclease that specifically degrades the RNA of RNA-DNA hybrids. The chain is Ribonuclease HIII from Leuconostoc mesenteroides subsp. mesenteroides (strain ATCC 8293 / DSM 20343 / BCRC 11652 / CCM 1803 / JCM 6124 / NCDO 523 / NBRC 100496 / NCIMB 8023 / NCTC 12954 / NRRL B-1118 / 37Y).